The chain runs to 212 residues: Ribosomal RNA small subunit methyltransferase G (212 aa).

Residues Gly72, Leu77, 123–124 (VE), and Arg138 each bind S-adenosyl-L-methionine.

Belongs to the methyltransferase superfamily. RNA methyltransferase RsmG family.

Its subcellular location is the cytoplasm. It carries out the reaction guanosine(527) in 16S rRNA + S-adenosyl-L-methionine = N(7)-methylguanosine(527) in 16S rRNA + S-adenosyl-L-homocysteine. Functionally, specifically methylates the N7 position of guanine in position 527 of 16S rRNA. This chain is Ribosomal RNA small subunit methyltransferase G, found in Histophilus somni (strain 2336) (Haemophilus somnus).